Here is a 346-residue protein sequence, read N- to C-terminus: Inositol 2-dehydrogenase (346 aa).

This sequence belongs to the Gfo/Idh/MocA family. Homotetramer.

The catalysed reaction is myo-inositol + NAD(+) = scyllo-inosose + NADH + H(+). Functionally, involved in the oxidation of myo-inositol (MI) to 2-keto-myo-inositol (2KMI or 2-inosose). This chain is Inositol 2-dehydrogenase, found in Rhodococcus erythropolis (strain PR4 / NBRC 100887).